Consider the following 126-residue polypeptide: Prefoldin subunit beta (126 aa).

It belongs to the prefoldin subunit beta family. In terms of assembly, heterohexamer of two alpha and four beta subunits.

Its subcellular location is the cytoplasm. Functionally, molecular chaperone capable of stabilizing a range of proteins. Seems to fulfill an ATP-independent, HSP70-like function in archaeal de novo protein folding. The sequence is that of Prefoldin subunit beta from Pyrobaculum neutrophilum (strain DSM 2338 / JCM 9278 / NBRC 100436 / V24Sta) (Thermoproteus neutrophilus).